The following is a 674-amino-acid chain: Endopolyphosphatase (674 aa).

Topologically, residues 1–21 (MVVVGKSEVRNVSMSRPKKKS) are cytoplasmic. 2 propeptides (removed in mature form) span residues 1-83 (MVVV…VIIK) and 385-674 (EQST…YKDD). K6 participates in a covalent cross-link: Glycyl lysine isopeptide (Lys-Gly) (interchain with G-Cter in ubiquitin). Residues 22–42 (LIAILSTCVLFFLVFIIGAKF) form a helical; Signal-anchor for type II membrane protein membrane-spanning segment. The Vacuolar portion of the chain corresponds to 43–674 (QYVSVFSKFL…SFASSGYKDD (632 aa)). N58 carries an N-linked (GlcNAc...) asparagine glycan. Positions 384-403 (MEQSTRVQQGEDSNEEDEET) are disordered. N505 and N511 each carry an N-linked (GlcNAc...) asparagine glycan.

This sequence belongs to the endopolyphosphatase PPN1 family. Homotetramer. Interacts with PPN2. The cofactor is Mn(2+). Mg(2+) serves as cofactor. Co(2+) is required as a cofactor. Requires Zn(2+) as cofactor. Processing by proteases in the vacuole is required for activation. In terms of processing, ubiquitinated. Ubiquitination mediates sorting into internal vesicles in late endosomes. TUL1 and RSP5 are required for ubiquitination. Other cytoplasmic Lys residues than Lys-6 may also be ubiquitinated. Post-translationally, N-glycosylated. N-glycosylation is essential for the protease-mediated maturation.

Its subcellular location is the vacuole membrane. The protein resides in the cytoplasm. The enzyme catalyses [phosphate](n+1) + n H2O = (n+1) phosphate + n H(+). It carries out the reaction [phosphate](n) + H2O = [phosphate](n-1) + phosphate + H(+). It catalyses the reaction dATP + H2O = dADP + phosphate + H(+). With respect to regulation, inhibited by heparin and EDTA. Catalyzes the hydrolysis of inorganic polyphosphate (polyP) chains of many hundreds of phosphate residues into shorter lengths. Has both exopolyphosphatase and endopolyphosphatase activities at different ratios depending on divalent cations by cleaving phosphate from the chain end and by fragmenting long-chain polymers into shorter ones, respectively. The limited digestion products are 1 and 3 P(i) residues. Also releases phosphate from dATP. dATP phosphohydrolase activity is about 7-fold lower than the exopolyphosphatase activity. In Saccharomyces cerevisiae (strain ATCC 204508 / S288c) (Baker's yeast), this protein is Endopolyphosphatase.